The following is a 979-amino-acid chain: Pro-apoptotic serine protease NMA111 (979 aa).

Positions 1-20 (MKRNGESHLNGEAKKSRTEQ) are enriched in basic and acidic residues. A disordered region spans residues 1 to 43 (MKRNGESHLNGEAKKSRTEQNQEQQDYQDEYYSSSDEELLPSS). Positions 21–34 (NQEQQDYQDEYYSS) are enriched in low complexity. The segment at 65–260 (KVVNSVVSIQ…LPVSRPKRAL (196 aa)) is serine protease. Residues His-108, Asp-139, and Ser-222 each act as charge relay system in the active site. PDZ domains are found at residues 277 to 362 (EWQL…FVFQ) and 871 to 943 (PHYG…VSFD).

This sequence belongs to the peptidase S1C family.

It is found in the nucleus. In terms of biological role, nuclear serine protease which mediates apoptosis. The chain is Pro-apoptotic serine protease NMA111 (NMA111) from Lodderomyces elongisporus (strain ATCC 11503 / CBS 2605 / JCM 1781 / NBRC 1676 / NRRL YB-4239) (Yeast).